Reading from the N-terminus, the 298-residue chain is Protease HtpX homolog (298 aa).

The next 2 membrane-spanning stretches (helical) occupy residues 14-34 (VVLL…AGYL) and 39-59 (YAMG…SMIF). His-143 is a binding site for Zn(2+). Glu-144 is a catalytic residue. His-147 contacts Zn(2+). The next 2 helical transmembrane spans lie at 158 to 178 (IAVA…RMLW) and 197 to 217 (IITL…ASLI). Glu-226 contributes to the Zn(2+) binding site.

Belongs to the peptidase M48B family. Requires Zn(2+) as cofactor.

The protein resides in the cell membrane. The sequence is that of Protease HtpX homolog from Streptococcus pyogenes serotype M1.